The primary structure comprises 168 residues: Protein OPG162 (168 aa).

Topologically, residues 1-14 (MKSLNRQTVSRFKK) are intravirion. Residues 15–37 (LSVPAAIMMILSTIISGIGTFLH) traverse the membrane as a helical segment. Over 38–168 (YKEELMPSAC…SVLCVKKFYK (131 aa)) the chain is Virion surface. The 110-residue stretch at 54 to 163 (YDKHCYLDTN…CKSTQSVLCV (110 aa)) folds into the C-type lectin domain. Cystine bridges form between C75-C162 and C141-C154. N133 is a glycosylation site (N-linked (GlcNAc...) asparagine; by host).

Belongs to the orthopoxvirus OPG162 protein family. In terms of assembly, interacts with protein OPG161. Interacts with protein OPG164. Interacts with protein OPG190.

Its subcellular location is the virion membrane. It is found in the host Golgi apparatus. Functionally, forms a complex with OPG162 and OPG190 to coordinate the incorporation of OPG164 into wrapped enveloped virion (EV) membranes and, subsequently, the production of actin tails. Therefore plays an essential role in efficient cell-to-cell spread of viral particles. In Vaccinia virus (strain Western Reserve) (VACV), this protein is Protein OPG162 (OPG162).